Reading from the N-terminus, the 372-residue chain is MNIKKVNLLDLNREGLRAFFVELGEKPFRAEQVMKWIYHYGCEDFDLMSNVNKKLRQKLKECAEIVAPEIKVEQRSNDGTIKWAMTVGDQEVETVYIPEKDRATLCISSQVGCVLACNFCSTAQQGFNRNLSVSEIIGQVWRAAKIVGVTGESGKRPITNVVMMGMGEPLLNLNNLIPAMELMLDDFGYALSKRRVTVSTSGVVPALDILGDRIDVSLAISLHAANDTLRSQMMPINDKYNIADFLAGVKRYIAKSKANRGKVYIEYLLLDHFNDSTDQAHELAILLKDTPCKINLIPFNPFPGNDYQKPSNSRVDRFNKVLMEYGYTVTVRKTRGDDIDAACGQLVGDVIDRTKRTMKKRLQGENIAISAG.

Residue E93 is the Proton acceptor of the active site. A Radical SAM core domain is found at 99–338; it reads EKDRATLCIS…VTVRKTRGDD (240 aa). C106 and C343 are joined by a disulfide. The [4Fe-4S] cluster site is built by C113, C117, and C120. S-adenosyl-L-methionine-binding positions include 167 to 168, S199, 221 to 223, and N300; these read GE and SLH. The active-site S-methylcysteine intermediate is the C343.

It belongs to the radical SAM superfamily. RlmN family. Requires [4Fe-4S] cluster as cofactor.

It is found in the cytoplasm. The catalysed reaction is adenosine(2503) in 23S rRNA + 2 reduced [2Fe-2S]-[ferredoxin] + 2 S-adenosyl-L-methionine = 2-methyladenosine(2503) in 23S rRNA + 5'-deoxyadenosine + L-methionine + 2 oxidized [2Fe-2S]-[ferredoxin] + S-adenosyl-L-homocysteine. The enzyme catalyses adenosine(37) in tRNA + 2 reduced [2Fe-2S]-[ferredoxin] + 2 S-adenosyl-L-methionine = 2-methyladenosine(37) in tRNA + 5'-deoxyadenosine + L-methionine + 2 oxidized [2Fe-2S]-[ferredoxin] + S-adenosyl-L-homocysteine. Its function is as follows. Specifically methylates position 2 of adenine 2503 in 23S rRNA and position 2 of adenine 37 in tRNAs. m2A2503 modification seems to play a crucial role in the proofreading step occurring at the peptidyl transferase center and thus would serve to optimize ribosomal fidelity. The protein is Dual-specificity RNA methyltransferase RlmN of Psychromonas ingrahamii (strain DSM 17664 / CCUG 51855 / 37).